Here is a 166-residue protein sequence, read N- to C-terminus: Deglycase PH1704 (166 aa).

Residues methionine 1–lysine 166 form the PfpI endopeptidase domain. Cysteine 100 acts as the Nucleophile in catalysis. Histidine 101 is an active-site residue.

This sequence belongs to the peptidase C56 family. As to quaternary structure, homohexamer formed by a dimer of trimers that assemble into a hollow ring structure.

It localises to the cytoplasm. It catalyses the reaction N(omega)-(1-hydroxy-2-oxopropyl)-L-arginyl-[protein] + H2O = lactate + L-arginyl-[protein] + H(+). The catalysed reaction is N(6)-(1-hydroxy-2-oxopropyl)-L-lysyl-[protein] + H2O = lactate + L-lysyl-[protein] + H(+). The enzyme catalyses S-(1-hydroxy-2-oxopropyl)-L-cysteinyl-[protein] + H2O = lactate + L-cysteinyl-[protein] + H(+). It carries out the reaction N(omega)-(1-hydroxy-2-oxoethyl)-L-arginyl-[protein] + H2O = L-arginyl-[protein] + glycolate + H(+). It catalyses the reaction N(6)-(1-hydroxy-2-oxoethyl)-L-lysyl-[protein] + H2O = glycolate + L-lysyl-[protein] + H(+). The catalysed reaction is S-(1-hydroxy-2-oxoethyl)-L-cysteinyl-[protein] + H2O = glycolate + L-cysteinyl-[protein] + H(+). Deglycase that catalyzes the deglycation of the Maillard adducts formed between amino groups of proteins and reactive carbonyl groups of glyoxals. Thus, functions as a protein deglycase that repairs methylglyoxal- and glyoxal-glycated proteins, and releases repaired proteins and lactate or glycolate, respectively. Deglycates cysteine, arginine and lysine residues in proteins, and thus reactivates these proteins by reversing glycation by glyoxals. Acts on early glycation intermediates (hemithioacetals and aminocarbinols), preventing the formation of advanced glycation endproducts (AGE) that cause irreversible damage. Also displays proteolytic activity. This is Deglycase PH1704 from Pyrococcus horikoshii (strain ATCC 700860 / DSM 12428 / JCM 9974 / NBRC 100139 / OT-3).